The following is a 221-amino-acid chain: Small ribosomal subunit protein uS5 (221 aa).

An S5 DRBM domain is found at 46 to 109 (LKDEVIDIKR…INAKLNIMEI (64 aa)).

Belongs to the universal ribosomal protein uS5 family. In terms of assembly, part of the 30S ribosomal subunit. Contacts protein S4.

With S4 and S12 plays an important role in translational accuracy. The protein is Small ribosomal subunit protein uS5 of Thermoplasma acidophilum (strain ATCC 25905 / DSM 1728 / JCM 9062 / NBRC 15155 / AMRC-C165).